The chain runs to 275 residues: Adenylate kinase 2 (275 aa).

G2 is lipidated: N-myristoyl glycine. The interval 21-30 is required for cell membrane translocation but dispensable for cell membrane localization; the sequence is KKKEKKKKKK. Residue 39–44 participates in ATP binding; the sequence is GSGKDT. The NMP stretch occupies residues 59–97; it reads CISKLLKEYKEEYNKENVLNEEENYFDEIEKCMIDGSLV. Residues 95–97, 126–129, and Q133 each bind AMP; these read SLV and GFPR. An ATP-binding site is contributed by R164. The segment at 165 to 214 is LID; the sequence is IIDPITNISYNENIIQIIKKKREGQELSDKEQKQLIIDNHLYNNLSNDIL. AMP-binding residues include R220 and R231.

The protein belongs to the adenylate kinase family. In terms of assembly, monomer. Oligomer. Heterodimer composed of NMT and AK2; AK2 myristoylation stabilizes the complex. Myristoylation is required for cell membrane localization. In terms of processing, may be palmitoylated at Cys-4 which stabilizes cell membrane localization of the myristoylated protein.

It is found in the parasitophorous vacuole membrane. The catalysed reaction is AMP + ATP = 2 ADP. Functionally, catalyzes the reversible transfer of the terminal phosphate group between ATP and AMP. Has very low activity with CTP, GTP, ITP and UTP and no activity with GMP, UMP or IMP in vitro. The sequence is that of Adenylate kinase 2 from Plasmodium falciparum (isolate 3D7).